The sequence spans 705 residues: MSLGPLKAINDKQLNTRSKLVHTPIKGNTADLVGKENHFKQTKRLDPNNDHHHQPAQKKKREKLSALCKTPPSLIKTRGKDYHRGHFLGEGGFARCFQIKDDSGEIFAAKTVAKASIKSEKTRKKLLSEIQIHKSMSHPNIVQFIDCFEDDSNVYILLEICPNGSLMELLKRRKVLTEPEVRFFTTQICGAIKYMHSRRVIHRDLKLGNIFFDSNYNLKIGDFGLAAVLANESERKYTICGTPNYIAPEVLMGKHSGHSFEVDIWSLGVMLYALLIGKPPFQARDVNTIYERIKCRDFSFPRDKPISDEGKILIRDILSLDPIERPSLTEIMDYVWFRGTFPPSIPSTVMSEAPNFEDIPEEQSLVNFKDCMEKSLLLESMSSDKIQRQKRDYISSIKSSIDKLEEYHQNRPFLPHSLSPGGTKQKYKEVVDIEAQRRLNDLAREARIRRAQQAVLRKELIATSTNVIKSEISLRILASECHLTLNGIVEAEAQYKMGGLPKSRLPKIKHPMIVTKWVDYSNKHGFSYQLSTEDIGVLFNNGTTVLRLADAEEFWYISYDDREGWVASHYLLSEKPRELSRHLEVVDFFAKYMKANLSRVSTFGREEYHKDDVFLRRYTRYKPFVMFELSDGTFQFNFKDHHKMAISDGGKLVTYISPSHESTTYPLVEVLKYGEIPGYPESNFREKLTLIKEGLKQKSTIVTVD.

The residue at position 23 (Thr-23) is a Phosphothreonine. Positions 41-53 are enriched in basic and acidic residues; the sequence is QTKRLDPNNDHHH. Positions 41-63 are disordered; it reads QTKRLDPNNDHHHQPAQKKKREK. The Protein kinase domain occupies 82-337; sequence YHRGHFLGEG…LTEIMDYVWF (256 aa). Residues 88–96 and Lys-110 contribute to the ATP site; that span reads LGEGGFARC. Catalysis depends on Asp-204, which acts as the Proton acceptor. Ser-419 carries the post-translational modification Phosphoserine. The region spanning 513-595 is the POLO box 1 domain; the sequence is IVTKWVDYSN…VDFFAKYMKA (83 aa). Zn(2+)-binding residues include Glu-553, His-569, His-609, and Asp-612. Residues 614 to 700 form the POLO box 2 domain; that stretch reads FLRRYTRYKP…IKEGLKQKST (87 aa).

It belongs to the protein kinase superfamily. Ser/Thr protein kinase family. CDC5/Polo subfamily. Interacts with CDC48; the interaction is likely to result in CDC5 degradation. Interacts with CSA1.

It localises to the cytoplasm. Its subcellular location is the cytoskeleton. It is found in the microtubule organizing center. The protein resides in the spindle pole body. The catalysed reaction is L-seryl-[protein] + ATP = O-phospho-L-seryl-[protein] + ADP + H(+). The enzyme catalyses L-threonyl-[protein] + ATP = O-phospho-L-threonyl-[protein] + ADP + H(+). Functionally, protein kinase required for the cell cycle where it is involved in mitotic exit. A component of the fear (CDC14 early anaphase release) network which promotes CDC14 release from the nucleolus during early anaphase. Phosphorylates SCC1/MCD1 and NET1. In Saccharomyces cerevisiae (strain ATCC 204508 / S288c) (Baker's yeast), this protein is Cell cycle serine/threonine-protein kinase CDC5/MSD2 (CDC5).